A 184-amino-acid polypeptide reads, in one-letter code: uncharacterized protein (184 aa).

The signal sequence occupies residues 1 to 20 (MTLRKILALTCLLLPMMASA).

To H.influenzae HI_0045.

Its subcellular location is the periplasm. This is an uncharacterized protein from Escherichia coli (strain K12).